We begin with the raw amino-acid sequence, 427 residues long: Transcobalamin-2 (427 aa).

Residues 1–18 (MRHLGAFLFLLGVLGALT) form the signal peptide. Cystine bridges form between cysteine 21–cysteine 267, cysteine 83–cysteine 96, cysteine 116–cysteine 309, and cysteine 165–cysteine 205. Residues glutamine 104, 152-156 (TSYYQ), histidine 190, 190-194 (HHSVD), asparagine 242, serine 245, glutamine 291, and 395-397 (WQL) contribute to the cob(II)alamin site.

Belongs to the eukaryotic cobalamin transport proteins family. As to quaternary structure, interacts with CD320 (via LDL-receptor class A domains).

Its subcellular location is the secreted. In terms of biological role, primary vitamin B12-binding and transport protein. Delivers cobalamin to cells. This Homo sapiens (Human) protein is Transcobalamin-2 (TCN2).